Here is a 142-residue protein sequence, read N- to C-terminus: MAKKVTGYLKLQVPAGAANPSPPIGPALGQRGLNIMEFCKAFNAQTQKEEKNTPIPVVITIYADRSFTFELKTPPMSFFLKQAAKIQSGSKLPGRDSAGKVTTAQVREIAEKKMKDLNCDSIDSAMRMVEGSARSMGLQVEG.

This sequence belongs to the universal ribosomal protein uL11 family. As to quaternary structure, part of the ribosomal stalk of the 50S ribosomal subunit. Interacts with L10 and the large rRNA to form the base of the stalk. L10 forms an elongated spine to which L12 dimers bind in a sequential fashion forming a multimeric L10(L12)X complex. In terms of processing, one or more lysine residues are methylated.

In terms of biological role, forms part of the ribosomal stalk which helps the ribosome interact with GTP-bound translation factors. The chain is Large ribosomal subunit protein uL11 from Rhodopseudomonas palustris (strain BisB5).